The following is a 793-amino-acid chain: Protocadherin beta-7 (793 aa).

A signal peptide spans 1–26; that stretch reads MEARVERAVQKRQVLFLCVFLGMSWA. The Extracellular segment spans residues 27-688; that stretch reads GAEPLRYFVA…DQANSLTVYL (662 aa). Cadherin domains are found at residues 35–133, 138–242, 247–347, 352–451, and 456–561; these read VAEE…APVF, ISLK…APDF, YKVQ…RPEL, LTSP…APAF, and YTLF…SPFV. The N-linked (GlcNAc...) asparagine glycan is linked to Asn169. Asn418 and Asn436 each carry an N-linked (GlcNAc...) asparagine glycan. N-linked (GlcNAc...) asparagine glycosylation is present at Asn567. A Cadherin 6 domain is found at 568 to 671; sequence SSAPCTEPLP…LVDGFSQPYL (104 aa). A helical membrane pass occupies residues 689–709; the sequence is VVALASVSSLFLLSVLLFVAV. Topologically, residues 710–793 are cytoplasmic; it reads RLCRRSRAAP…NRPFQNNLGF (84 aa).

It localises to the cell membrane. Its function is as follows. Potential calcium-dependent cell-adhesion protein. May be involved in the establishment and maintenance of specific neuronal connections in the brain. The protein is Protocadherin beta-7 (PCDHB7) of Homo sapiens (Human).